The sequence spans 368 residues: Molybdenum import ATP-binding protein ModC (368 aa).

Residues methionine 1 to serine 230 form the ABC transporter domain. Residue glycine 32–threonine 39 coordinates ATP. Positions alanine 291–aspartate 362 constitute a Mop domain.

Belongs to the ABC transporter superfamily. Molybdate importer (TC 3.A.1.8) family. The complex is composed of two ATP-binding proteins (ModC), two transmembrane proteins (ModB) and a solute-binding protein (ModA).

It is found in the cell inner membrane. It catalyses the reaction molybdate(out) + ATP + H2O = molybdate(in) + ADP + phosphate + H(+). Functionally, part of the ABC transporter complex ModABC involved in molybdenum import. Responsible for energy coupling to the transport system. This Vibrio parahaemolyticus serotype O3:K6 (strain RIMD 2210633) protein is Molybdenum import ATP-binding protein ModC.